The following is a 144-amino-acid chain: Large ribosomal subunit protein uL13 (144 aa).

It belongs to the universal ribosomal protein uL13 family. In terms of assembly, part of the 50S ribosomal subunit.

This protein is one of the early assembly proteins of the 50S ribosomal subunit, although it is not seen to bind rRNA by itself. It is important during the early stages of 50S assembly. This Desulfovibrio desulfuricans (strain ATCC 27774 / DSM 6949 / MB) protein is Large ribosomal subunit protein uL13.